A 108-amino-acid chain; its full sequence is Urease subunit beta (108 aa).

It belongs to the urease beta subunit family. In terms of assembly, heterotrimer of UreA (gamma), UreB (beta) and UreC (alpha) subunits. Three heterotrimers associate to form the active enzyme.

The protein resides in the cytoplasm. It carries out the reaction urea + 2 H2O + H(+) = hydrogencarbonate + 2 NH4(+). It participates in nitrogen metabolism; urea degradation; CO(2) and NH(3) from urea (urease route): step 1/1. This chain is Urease subunit beta, found in Proteus hauseri.